A 269-amino-acid polypeptide reads, in one-letter code: MPELPEVETSRRGIEPHLVGATILHAHIRNGRLRWPVSDEIYRLSDTPVLSVQRRAKYLLLELPDGWIIIHLGMSGSLRILPEALPAEKHDHVDLVMSNGKILRYTDPRRFGAWLWTKELEGHNVLAHLGPEPLSGEFNGEYLQQKCAKKKTAIKPWLMDNKLVVGVGNIYASESLFAAGIHPDRLASSLSTEECDLLARVIKAVLLRSIEQGGTTLKDFLQSDGKPGYFAQELQVYGRKGEPCRVCGTPIVATKHAQRATFYCRHCQK.

Residue Pro-2 is the Schiff-base intermediate with DNA of the active site. The active-site Proton donor is Glu-3. Lys-57 acts as the Proton donor; for beta-elimination activity in catalysis. Positions 90, 109, and 150 each coordinate DNA. The FPG-type zinc finger occupies 235 to 269 (QVYGRKGEPCRVCGTPIVATKHAQRATFYCRHCQK). Residue Arg-259 is the Proton donor; for delta-elimination activity of the active site.

This sequence belongs to the FPG family. Monomer. It depends on Zn(2+) as a cofactor.

It catalyses the reaction Hydrolysis of DNA containing ring-opened 7-methylguanine residues, releasing 2,6-diamino-4-hydroxy-5-(N-methyl)formamidopyrimidine.. The catalysed reaction is 2'-deoxyribonucleotide-(2'-deoxyribose 5'-phosphate)-2'-deoxyribonucleotide-DNA = a 3'-end 2'-deoxyribonucleotide-(2,3-dehydro-2,3-deoxyribose 5'-phosphate)-DNA + a 5'-end 5'-phospho-2'-deoxyribonucleoside-DNA + H(+). Functionally, involved in base excision repair of DNA damaged by oxidation or by mutagenic agents. Acts as a DNA glycosylase that recognizes and removes damaged bases. Has a preference for oxidized purines, such as 7,8-dihydro-8-oxoguanine (8-oxoG). Has AP (apurinic/apyrimidinic) lyase activity and introduces nicks in the DNA strand. Cleaves the DNA backbone by beta-delta elimination to generate a single-strand break at the site of the removed base with both 3'- and 5'-phosphates. The protein is Formamidopyrimidine-DNA glycosylase of Salmonella choleraesuis (strain SC-B67).